Here is a 396-residue protein sequence, read N- to C-terminus: Elongation factor Tu (396 aa).

In terms of domain architecture, tr-type G spans 10 to 206 (KPHVNIGTIG…AVDAYIPEPE (197 aa)). A G1 region spans residues 19 to 26 (GHVDHGKT). 19-26 (GHVDHGKT) is a binding site for GTP. Mg(2+) is bound at residue Thr26. The G2 stretch occupies residues 60-64 (GITIA). The segment at 81–84 (DCPG) is G3. GTP is bound by residues 81–85 (DCPGH) and 136–139 (NKAD). A G4 region spans residues 136-139 (NKAD). The segment at 174-176 (SAL) is G5.

It belongs to the TRAFAC class translation factor GTPase superfamily. Classic translation factor GTPase family. EF-Tu/EF-1A subfamily. Monomer.

The protein localises to the cytoplasm. It catalyses the reaction GTP + H2O = GDP + phosphate + H(+). Its function is as follows. GTP hydrolase that promotes the GTP-dependent binding of aminoacyl-tRNA to the A-site of ribosomes during protein biosynthesis. This Geobacter metallireducens (strain ATCC 53774 / DSM 7210 / GS-15) protein is Elongation factor Tu.